Consider the following 389-residue polypeptide: Probable tRNA sulfurtransferase (389 aa).

In terms of domain architecture, THUMP spans 57–165 (DEALDRLSKI…EDETYIYHRV (109 aa)). ATP-binding positions include 183-184 (LL), Lys267, Gly289, and Gln298.

It belongs to the ThiI family.

It is found in the cytoplasm. It catalyses the reaction [ThiI sulfur-carrier protein]-S-sulfanyl-L-cysteine + a uridine in tRNA + 2 reduced [2Fe-2S]-[ferredoxin] + ATP + H(+) = [ThiI sulfur-carrier protein]-L-cysteine + a 4-thiouridine in tRNA + 2 oxidized [2Fe-2S]-[ferredoxin] + AMP + diphosphate. The catalysed reaction is [ThiS sulfur-carrier protein]-C-terminal Gly-Gly-AMP + S-sulfanyl-L-cysteinyl-[cysteine desulfurase] + AH2 = [ThiS sulfur-carrier protein]-C-terminal-Gly-aminoethanethioate + L-cysteinyl-[cysteine desulfurase] + A + AMP + 2 H(+). The protein operates within cofactor biosynthesis; thiamine diphosphate biosynthesis. Its function is as follows. Catalyzes the ATP-dependent transfer of a sulfur to tRNA to produce 4-thiouridine in position 8 of tRNAs, which functions as a near-UV photosensor. Also catalyzes the transfer of sulfur to the sulfur carrier protein ThiS, forming ThiS-thiocarboxylate. This is a step in the synthesis of thiazole, in the thiamine biosynthesis pathway. The sulfur is donated as persulfide by IscS. The chain is Probable tRNA sulfurtransferase from Methanothermobacter thermautotrophicus (strain ATCC 29096 / DSM 1053 / JCM 10044 / NBRC 100330 / Delta H) (Methanobacterium thermoautotrophicum).